A 742-amino-acid polypeptide reads, in one-letter code: Synaptic vesicle glycoprotein 2A (742 aa).

Residues 1 to 57 (MEEGFRDRAAFIRGAKDIAKEVKKHATKKVVKGLDRVQDEYSRRSYSRFEEEDDDDD) are interaction with SYT1. Residues 1–169 (MEEGFRDRAA…GHGRFQWTLY (169 aa)) are Cytoplasmic-facing. Positions 32 to 49 (KGLDRVQDEYSRRSYSRF) are enriched in basic and acidic residues. The tract at residues 32 to 144 (KGLDRVQDEY…GRGEAQRRKE (113 aa)) is disordered. Phosphoserine is present on residues Ser-80 and Ser-81. Thr-84 is subject to Phosphothreonine. Gly residues predominate over residues 122–137 (VRGGLGDGEGPPGGRG). The helical transmembrane segment at 170 to 190 (FVLGLALMADGVEVFVVGFVL) threads the bilayer. Residues 191–205 (PSAEKDMCLSDSNKG) lie on the Extracellular side of the membrane. Residues 206 to 226 (MLGLIVYLGMMVGAFLWGGLA) traverse the membrane as a helical segment. The Cytoplasmic segment spans residues 227–233 (DRLGRRQ). Residues 234 to 254 (CLLISLSVNSVFAFFSSFVQG) form a helical membrane-spanning segment. Over 255–262 (YGTFLFCR) the chain is Extracellular. A helical membrane pass occupies residues 263-283 (LLSGVGIGGSIPIVFSYFSEF). The Cytoplasmic segment spans residues 284–294 (LAQEKRGEHLS). Residues 295 to 315 (WLCMFWMIGGVYAAAMAWAII) form a helical membrane-spanning segment. Over 316–334 (PHYGWSFQMGSAYQFHSWR) the chain is Extracellular. The chain crosses the membrane as a helical span at residues 335 to 355 (VFVLVCAFPSVFAIGALTTQP). The Cytoplasmic segment spans residues 356–447 (ESPRFFLENG…CFGPEYRRIT (92 aa)). Phosphoserine is present on Ser-393. The helical transmembrane segment at 448-468 (LMMMGVWFTMSFSYYGLTVWF) threads the bilayer. Over 469-598 (PDMIRHLQAV…GTGEGAYMVY (130 aa)) the chain is Extracellular. Residue Tyr-480 is modified to Phosphotyrosine. N-linked (GlcNAc...) asparagine glycosylation is found at Asn-498, Asn-548, and Asn-573. A helical transmembrane segment spans residues 599-619 (FVSFLGTLAVLPGNIVSALLM). The Cytoplasmic segment spans residues 620 to 626 (DKIGRLR). The helical transmembrane segment at 627 to 647 (MLAGSSVMSCVSCFFLSFGNS) threads the bilayer. The Extracellular segment spans residues 648–651 (ESAM). Residues 652 to 672 (IALLCLFGGVSIASWNALDVL) form a helical membrane-spanning segment. At 673–685 (TVELYPSDKRTTA) the chain is on the cytoplasmic side. Residues 686 to 708 (FGFLNALCKLAAVLGISIFTSFV) form a helical membrane-spanning segment. Over 709 to 712 (GITK) the chain is Extracellular. The helical transmembrane segment at 713–731 (AAPILFASAALALGSSLAL) threads the bilayer. The Cytoplasmic segment spans residues 732–742 (KLPETRGQVLQ).

Belongs to the major facilitator superfamily. Interacts with SYT1/synaptotagmin-1 in a calcium-dependent manner. Binds the adapter protein complex AP-2. Post-translationally, phosphorylation by CK1 of the N-terminal cytoplasmic domain regulates interaction with SYT1. N-glycosylated.

The protein resides in the presynapse. It localises to the cytoplasmic vesicle. Its subcellular location is the secretory vesicle. The protein localises to the synaptic vesicle membrane. In terms of biological role, plays a role in the control of regulated secretion in neural and endocrine cells, enhancing selectively low-frequency neurotransmission. Positively regulates vesicle fusion by maintaining the readily releasable pool of secretory vesicles. The sequence is that of Synaptic vesicle glycoprotein 2A (SV2A) from Bos taurus (Bovine).